Reading from the N-terminus, the 1322-residue chain is Transcription elongation factor SPT6-like (1322 aa).

The span at 1 to 17 (MNRIDEEPQIHEDPVEN) shows a compositional bias: basic and acidic residues. 2 disordered regions span residues 1–65 (MNRI…KKDE) and 90–113 (KRLK…DLSH). Positions 18–33 (REEDDEDEDDQYEFDD) are enriched in acidic residues. The segment covering 48–65 (EQRHCSEKKSRSRRKKDE) has biased composition (basic and acidic residues). Residues 97–110 (EEEDKINNDDDDDD) are compositionally biased toward acidic residues. In terms of domain architecture, S1 motif spans 1017-1088 (GRIVQATVKK…QRYHVLLVCK (72 aa)).

The protein belongs to the SPT6 family.

The protein localises to the nucleus. Functionally, transcription elongation factor that enhances the transcription elongation by RNA polymerase II (RNAPII). This Arabidopsis thaliana (Mouse-ear cress) protein is Transcription elongation factor SPT6-like.